Reading from the N-terminus, the 717-residue chain is Transport/processing ATP-binding protein ComA (717 aa).

Positions Gln11–Met138 constitute a Peptidase C39 domain. Cys17 is a catalytic residue. 6 consecutive transmembrane segments (helical) span residues Gly166–Ser186, Leu205–Ala225, Leu237–Phe257, Thr282–Ser302, Asn306–Met326, and Val397–Gly417. The ABC transmembrane type-1 domain occupies Ile168–Thr450. The 234-residue stretch at Met484–Ser717 folds into the ABC transporter domain. Gly517–Thr524 serves as a coordination point for ATP.

This sequence belongs to the ABC transporter superfamily. Competence factor exporter (TC 3.A.1.112.1) family.

Its subcellular location is the cell membrane. In terms of biological role, required for induction of competence. Seems to transport the competence-stimulating peptide (CSP). This is Transport/processing ATP-binding protein ComA (comA) from Streptococcus pneumoniae serotype 4 (strain ATCC BAA-334 / TIGR4).